We begin with the raw amino-acid sequence, 423 residues long: AP-1 complex subunit mu-2 (423 aa).

The region spanning 168-421 (KNEVFIDVIE…ITQSGDYQLR (254 aa)) is the MHD domain.

Belongs to the adaptor complexes medium subunit family. As to quaternary structure, adaptor protein complex 1 (AP-1) is a heterotetramer composed of two large adaptins (gamma-type subunit AP1G1 and beta-type subunit AP1B1), a medium adaptin (mu-type subunit AP1M1 or AP1M2) and a small adaptin (sigma-type subunit AP1S1 or AP1S2 or AP1S3). Interacts with P2X4. In terms of processing, phosphorylation of membrane-bound AP1M1/AP1M2 increases its affinity for sorting signals.

It is found in the golgi apparatus. The protein localises to the cytoplasmic vesicle. It localises to the clathrin-coated vesicle membrane. Subunit of clathrin-associated adaptor protein complex 1 that plays a role in protein sorting in the trans-Golgi network (TGN) and endosomes. The AP complexes mediate the recruitment of clathrin to membranes and the recognition of sorting signals within the cytosolic tails of transmembrane cargo molecules. The chain is AP-1 complex subunit mu-2 (AP1M2) from Homo sapiens (Human).